Reading from the N-terminus, the 381-residue chain is 8-amino-7-oxononanoate synthase (381 aa).

Arg27 lines the substrate pocket. 105-106 (GY) contacts pyridoxal 5'-phosphate. Substrate is bound at residue His130. Pyridoxal 5'-phosphate contacts are provided by residues Ser176, 201–204 (DEAH), and 232–235 (TLSK). Lys235 carries the N6-(pyridoxal phosphate)lysine modification. A substrate-binding site is contributed by Thr345.

The protein belongs to the class-II pyridoxal-phosphate-dependent aminotransferase family. BioF subfamily. As to quaternary structure, homodimer. Pyridoxal 5'-phosphate is required as a cofactor.

The catalysed reaction is 6-carboxyhexanoyl-[ACP] + L-alanine + H(+) = (8S)-8-amino-7-oxononanoate + holo-[ACP] + CO2. It functions in the pathway cofactor biosynthesis; biotin biosynthesis. Catalyzes the decarboxylative condensation of pimeloyl-[acyl-carrier protein] and L-alanine to produce 8-amino-7-oxononanoate (AON), [acyl-carrier protein], and carbon dioxide. This Mycolicibacterium paratuberculosis (strain ATCC BAA-968 / K-10) (Mycobacterium paratuberculosis) protein is 8-amino-7-oxononanoate synthase.